The primary structure comprises 284 residues: Signal peptidase I (284 aa).

The helical transmembrane segment at 4–22 threads the bilayer; that stretch reads NFPLLLVIAVAVCGLLALL. At 23–58 the chain is on the cytoplasmic side; the sequence is DLVFFAPRRRSAIASYQGSVSQPDAVVIEKLNKEPL. A helical transmembrane segment spans residues 59–77; sequence LVEYGKSFFPVLFIVLVLR. Residues 78–284 lie on the Periplasmic side of the membrane; the sequence is SFLVEPFQIP…PNFSRVGLIK (207 aa). Catalysis depends on residues Ser90 and Lys145.

The protein belongs to the peptidase S26 family.

Its subcellular location is the cell inner membrane. The enzyme catalyses Cleavage of hydrophobic, N-terminal signal or leader sequences from secreted and periplasmic proteins.. The protein is Signal peptidase I (lepB) of Pseudomonas fluorescens.